The chain runs to 181 residues: Extracellular superoxide dismutase [Cu-Zn] (181 aa).

Residues 1–18 (MMQYLVVSLALCATICSA) form the signal peptide. N-linked (GlcNAc...) asparagine glycosylation is present at asparagine 46. Cu cation-binding residues include histidine 75, histidine 77, and histidine 92. Cysteine 86 and cysteine 175 are joined by a disulfide. Positions 92, 100, 109, and 112 each coordinate Zn(2+). The N-linked (GlcNAc...) asparagine glycan is linked to asparagine 119. Residue histidine 149 coordinates Cu cation. Residue asparagine 159 is glycosylated (N-linked (GlcNAc...) asparagine).

The protein belongs to the Cu-Zn superoxide dismutase family. Cu cation serves as cofactor. It depends on Zn(2+) as a cofactor. Expressed at higher levels in females compared to males.

The protein localises to the secreted. The enzyme catalyses 2 superoxide + 2 H(+) = H2O2 + O2. In terms of biological role, protects the extracellular space from the toxic effects of reactive oxygen intermediates by converting superoxide radicals into hydrogen peroxide and oxygen. This chain is Extracellular superoxide dismutase [Cu-Zn], found in Drosophila melanogaster (Fruit fly).